Here is a 448-residue protein sequence, read N- to C-terminus: Inositol polyphosphate 5-phosphatase K (448 aa).

A catalytic region spans residues 16-318 (IHVVTWNVAS…SDHKPVSGTF (303 aa)). Positions 318–448 (FDLELKPLVS…DPLGEAQPQI (131 aa)) are required for interaction with GPR78 and PAK1. Residues 321-448 (ELKPLVSAPL…DPLGEAQPQI (128 aa)) form a required for ruffle localization region.

Belongs to the inositol 1,4,5-trisphosphate 5-phosphatase type II family. Interacts with GPR78; necessary for INPP5K localization at the endoplasmic reticulum. Interacts with PAK1; competes with GPR78. As to expression, ubiquitously expressed with highest levels in skeletal muscle, heart and kidney.

Its subcellular location is the endoplasmic reticulum. The protein resides in the cytoplasm. The enzyme catalyses 1D-myo-inositol 1,4,5-trisphosphate + H2O = 1D-myo-inositol 1,4-bisphosphate + phosphate. The catalysed reaction is 1D-myo-inositol 1,3,4,5-tetrakisphosphate + H2O = 1D-myo-inositol 1,3,4-trisphosphate + phosphate. It carries out the reaction a 1,2-diacyl-sn-glycero-3-phospho-(1D-myo-inositol-4,5-bisphosphate) + H2O = a 1,2-diacyl-sn-glycero-3-phospho-(1D-myo-inositol 4-phosphate) + phosphate. It catalyses the reaction a 1,2-diacyl-sn-glycero-3-phospho-(1D-myo-inositol-3,4,5-trisphosphate) + H2O = a 1,2-diacyl-sn-glycero-3-phospho-(1D-myo-inositol-3,4-bisphosphate) + phosphate. The enzyme catalyses 1,2-dioctanoyl-sn-glycero-3-phospho-(1D-myo-inositol-3,4,5-trisphosphate) + H2O = 1,2-dioctanoyl-sn-glycero-3-phospho-(1D-myo-inositol-3,4-bisphosphate) + phosphate. In terms of biological role, inositol 5-phosphatase which acts on inositol 1,4,5-trisphosphate, inositol 1,3,4,5-tetrakisphosphate, phosphatidylinositol 4,5-bisphosphate and phosphatidylinositol 3,4,5-trisphosphate. Has 6-fold higher affinity for phosphatidylinositol 4,5-bisphosphate than for inositol 1,4,5-trisphosphate. Negatively regulates assembly of the actin cytoskeleton. Controls insulin-dependent glucose uptake among inositol 3,4,5-trisphosphate phosphatases; therefore, is the specific regulator for insulin signaling in skeletal muscle. The sequence is that of Inositol polyphosphate 5-phosphatase K from Homo sapiens (Human).